Here is a 664-residue protein sequence, read N- to C-terminus: Tripartite terminase subunit 1 (664 aa).

The segment at 205–233 (CHVCFEELCVTANQGATASRRLAGKICDH) adopts a C3H1-type zinc-finger fold. Disordered stretches follow at residues 273–295 (SKMT…AQER) and 440–466 (HAAE…GGPE). Positions 281–292 (GGPAEAPGPAAA) are enriched in low complexity.

This sequence belongs to the herpesviridae TRM1 protein family. Associates with TRM2 and TRM3 to form the tripartite terminase complex. Interacts with portal protein.

The protein resides in the host nucleus. Functionally, component of the molecular motor that translocates viral genomic DNA in empty capsid during DNA packaging. Forms a tripartite terminase complex together with TRM2 and TRM3 in the host cytoplasm. Once the complex reaches the host nucleus, it interacts with the capsid portal vertex. This portal forms a ring in which genomic DNA is translocated into the capsid. TRM1 carries an endonuclease activity that plays an important role for the cleavage of concatemeric viral DNA into unit length genomes. This chain is Tripartite terminase subunit 1, found in Bos taurus (Bovine).